A 260-amino-acid chain; its full sequence is Imidazole glycerol phosphate synthase subunit HisF (260 aa).

Catalysis depends on residues D11 and D130.

The protein belongs to the HisA/HisF family. In terms of assembly, heterodimer of HisH and HisF.

Its subcellular location is the cytoplasm. The catalysed reaction is 5-[(5-phospho-1-deoxy-D-ribulos-1-ylimino)methylamino]-1-(5-phospho-beta-D-ribosyl)imidazole-4-carboxamide + L-glutamine = D-erythro-1-(imidazol-4-yl)glycerol 3-phosphate + 5-amino-1-(5-phospho-beta-D-ribosyl)imidazole-4-carboxamide + L-glutamate + H(+). It functions in the pathway amino-acid biosynthesis; L-histidine biosynthesis; L-histidine from 5-phospho-alpha-D-ribose 1-diphosphate: step 5/9. Functionally, IGPS catalyzes the conversion of PRFAR and glutamine to IGP, AICAR and glutamate. The HisF subunit catalyzes the cyclization activity that produces IGP and AICAR from PRFAR using the ammonia provided by the HisH subunit. This is Imidazole glycerol phosphate synthase subunit HisF from Thermomicrobium roseum (strain ATCC 27502 / DSM 5159 / P-2).